The primary structure comprises 557 residues: ABC1 family protein MCP2 homolog (557 aa).

Residues 1–33 (MFSRFSWPRITRCFRSYPKKKSSCISFTHHARE) constitute a mitochondrion transit peptide. The Mitochondrial matrix portion of the chain corresponds to 34 to 39 (HTNFKK). A helical transmembrane segment spans residues 40-56 (PAVVGASITLMASVALV). Over 57–557 (DFDPVKHAGV…NYFYYKHMYL (501 aa)) the chain is Mitochondrial intermembrane.

It belongs to the protein kinase superfamily. ADCK protein kinase family.

The protein localises to the mitochondrion inner membrane. In terms of biological role, involved in mitochondrial lipid homeostasis. The chain is ABC1 family protein MCP2 homolog from Schizosaccharomyces pombe (strain 972 / ATCC 24843) (Fission yeast).